A 521-amino-acid chain; its full sequence is Protein translocase subunit SecD (521 aa).

The next 6 membrane-spanning stretches (helical) occupy residues 8 to 28 (LKLASVLGVCLLGLLLCLPNG), 359 to 379 (AGILSLGVGFLLVVVFMVLFY), 388 to 408 (IALLANLVLMVAILSLFEATL), 410 to 430 (LPGMAGMLLTLGMAVDANILI), 459 to 479 (IVDSNATAFLAHVMLFVFGTG), and 483 to 503 (GFALTITIGIATTLFTTLLLS).

The protein belongs to the SecD/SecF family. SecD subfamily. As to quaternary structure, forms a complex with SecF. Part of the essential Sec protein translocation apparatus which comprises SecA, SecYEG and auxiliary proteins SecDF-YajC and YidC.

Its subcellular location is the cell inner membrane. Its function is as follows. Part of the Sec protein translocase complex. Interacts with the SecYEG preprotein conducting channel. SecDF uses the proton motive force (PMF) to complete protein translocation after the ATP-dependent function of SecA. The sequence is that of Protein translocase subunit SecD from Acetobacter pasteurianus (strain NBRC 105184 / IFO 3283-01).